The chain runs to 287 residues: DegV domain-containing protein DR_0500 (287 aa).

A DegV domain is found at 7–280; the sequence is FAVVTDGGLD…PRALGVAAAP (274 aa). Ser62 and Ser93 together coordinate hexadecanoate.

May bind long-chain fatty acids, such as palmitate, and may play a role in lipid transport or fatty acid metabolism. The chain is DegV domain-containing protein DR_0500 from Deinococcus radiodurans (strain ATCC 13939 / DSM 20539 / JCM 16871 / CCUG 27074 / LMG 4051 / NBRC 15346 / NCIMB 9279 / VKM B-1422 / R1).